The following is a 159-amino-acid chain: Bacterioferritin (159 aa).

In terms of domain architecture, Ferritin-like diiron spans 1–145 (MQGDPEVLRL…TQLELMDKLG (145 aa)). Glutamate 51 lines the Fe cation pocket. Residue methionine 52 coordinates heme b. Fe cation contacts are provided by histidine 54, glutamate 94, glutamate 127, and histidine 130.

This sequence belongs to the bacterioferritin family. In terms of assembly, homooligomer of 24 subunits, arranged as 12 dimers, that are packed together to form an approximately spherical molecule with a central cavity, in which large amounts of iron can be deposited. Heme b serves as cofactor.

It catalyses the reaction 4 Fe(2+) + O2 + 4 H(+) = 4 Fe(3+) + 2 H2O. The enzyme catalyses Fe(2+)(in) = Fe(2+)(out). Its function is as follows. Iron-storage protein, whose ferroxidase center binds Fe(2+), oxidizes it using dioxygen to Fe(3+), and participates in the subsequent Fe(3+) oxide mineral core formation within the central cavity of the BFR protein shell. The protein is Bacterioferritin (bfr) of Mycobacterium avium.